We begin with the raw amino-acid sequence, 306 residues long: Recombination-associated protein RdgC (306 aa).

It belongs to the RdgC family.

The protein localises to the cytoplasm. It is found in the nucleoid. May be involved in recombination. The sequence is that of Recombination-associated protein RdgC from Pseudomonas putida (strain GB-1).